Here is a 309-residue protein sequence, read N- to C-terminus: HPr kinase/phosphorylase (309 aa).

Residues histidine 138 and lysine 159 contribute to the active site. 153 to 160 (GKSGIGKS) is a binding site for ATP. Serine 160 is a binding site for Mg(2+). Aspartate 177 functions as the Proton acceptor; for phosphorylation activity. Proton donor; for dephosphorylation activity in the catalytic mechanism. The segment at 201-210 (IEVRGIGILD) is important for the catalytic mechanism of both phosphorylation and dephosphorylation. Glutamate 202 serves as a coordination point for Mg(2+). Arginine 243 is an active-site residue. The segment at 264 to 269 (PIKPAR) is important for the catalytic mechanism of dephosphorylation.

The protein belongs to the HPrK/P family. Homohexamer. The cofactor is Mg(2+).

The enzyme catalyses [HPr protein]-L-serine + ATP = [HPr protein]-O-phospho-L-serine + ADP + H(+). It carries out the reaction [HPr protein]-O-phospho-L-serine + phosphate + H(+) = [HPr protein]-L-serine + diphosphate. In terms of biological role, catalyzes the ATP- as well as the pyrophosphate-dependent phosphorylation of a specific serine residue in HPr, a phosphocarrier protein of the phosphoenolpyruvate-dependent sugar phosphotransferase system (PTS). HprK/P also catalyzes the pyrophosphate-producing, inorganic phosphate-dependent dephosphorylation (phosphorolysis) of seryl-phosphorylated HPr (P-Ser-HPr). The two antagonistic activities of HprK/P are regulated by several intracellular metabolites, which change their concentration in response to the absence or presence of rapidly metabolisable carbon sources (glucose, fructose, etc.) in the growth medium. Therefore, by controlling the phosphorylation state of HPr, HPrK/P is a sensor enzyme that plays a major role in the regulation of carbon metabolism and sugar transport: it mediates carbon catabolite repression (CCR), and regulates PTS-catalyzed carbohydrate uptake and inducer exclusion. This is HPr kinase/phosphorylase from Alkaliphilus metalliredigens (strain QYMF).